A 512-amino-acid chain; its full sequence is Ribonuclease Y (512 aa).

Residues 3 to 23 form a helical membrane-spanning segment; sequence FQIILVVIISALVGLVIGFFI. In terms of domain architecture, KH spans 202-265; sequence TVAVIPLPND…EVARLALERL (64 aa). In terms of domain architecture, HD spans 328 to 421; the sequence is VLKHSIEVCH…VQAADAISAA (94 aa).

This sequence belongs to the RNase Y family.

It localises to the cell membrane. In terms of biological role, endoribonuclease that initiates mRNA decay. In Desulforamulus reducens (strain ATCC BAA-1160 / DSM 100696 / MI-1) (Desulfotomaculum reducens), this protein is Ribonuclease Y.